A 207-amino-acid chain; its full sequence is Ribosomal RNA large subunit methyltransferase E (207 aa).

Gly-49, Trp-51, Asp-69, Asp-87, and Asp-111 together coordinate S-adenosyl-L-methionine. Catalysis depends on Lys-151, which acts as the Proton acceptor.

The protein belongs to the class I-like SAM-binding methyltransferase superfamily. RNA methyltransferase RlmE family.

It is found in the cytoplasm. The enzyme catalyses uridine(2552) in 23S rRNA + S-adenosyl-L-methionine = 2'-O-methyluridine(2552) in 23S rRNA + S-adenosyl-L-homocysteine + H(+). Specifically methylates the uridine in position 2552 of 23S rRNA at the 2'-O position of the ribose in the fully assembled 50S ribosomal subunit. The sequence is that of Ribosomal RNA large subunit methyltransferase E from Oleidesulfovibrio alaskensis (strain ATCC BAA-1058 / DSM 17464 / G20) (Desulfovibrio alaskensis).